The following is a 244-amino-acid chain: Large ribosomal subunit protein uL3 (244 aa).

This sequence belongs to the universal ribosomal protein uL3 family. As to quaternary structure, part of the 50S ribosomal subunit. Forms a cluster with proteins L14 and L19.

Its function is as follows. One of the primary rRNA binding proteins, it binds directly near the 3'-end of the 23S rRNA, where it nucleates assembly of the 50S subunit. The protein is Large ribosomal subunit protein uL3 of Aquifex pyrophilus.